Here is a 140-residue protein sequence, read N- to C-terminus: ATP synthase epsilon chain (140 aa).

It belongs to the ATPase epsilon chain family. In terms of assembly, F-type ATPases have 2 components, CF(1) - the catalytic core - and CF(0) - the membrane proton channel. CF(1) has five subunits: alpha(3), beta(3), gamma(1), delta(1), epsilon(1). CF(0) has three main subunits: a, b and c.

The protein localises to the cell inner membrane. Produces ATP from ADP in the presence of a proton gradient across the membrane. The protein is ATP synthase epsilon chain of Alkalilimnicola ehrlichii (strain ATCC BAA-1101 / DSM 17681 / MLHE-1).